The chain runs to 315 residues: Calumenin (315 aa).

A signal peptide spans 1–19; that stretch reads MDLRQFLMCLSLCTAFALS. Phosphoserine is present on serine 44. At tyrosine 47 the chain carries Phosphotyrosine. The residue at position 65 (threonine 65) is a Phosphothreonine. EF-hand domains lie at 68–103, 104–139, 151–186, 188–223, 229–264, and 265–300; these read ESKERLGMIVDKIDADKDGFVTEGELKSWIKHAQKK, YIYDNVENQWQEFDLNQDGLISWDEYRNVTYGTYLD, QMMVRDERRFKMADKDGDLIATKEEFTAFLHPEEYD, MKDIVVQEPMEDIDKNADGFIDLEEYIGDMYSHDGN, WVKTEREQFVEFRDKNRDGKMDKEETKDWILPSDYD, and HAEAEARHLVYESDQNKDGKLTKEEIVDKYDLFVGS. A Phosphoserine modification is found at serine 69. Aspartate 81, aspartate 83, aspartate 85, glutamate 92, aspartate 117, asparagine 119, aspartate 121, and glutamate 128 together coordinate Ca(2+). N-linked (GlcNAc...) asparagine glycosylation is present at asparagine 131. Aspartate 164 contacts Ca(2+). The residue at position 165 (lysine 165) is an N6-acetyllysine. Residues aspartate 166, aspartate 168, glutamate 175, aspartate 201, asparagine 203, aspartate 205, glutamate 212, aspartate 242, asparagine 244, aspartate 246, lysine 248, and glutamate 253 each contribute to the Ca(2+) site. Residue threonine 254 is modified to Phosphothreonine. Phosphoserine is present on residues serine 261 and serine 277. Ca(2+) contacts are provided by aspartate 278, asparagine 280, aspartate 282, lysine 284, and glutamate 289. The Prevents secretion from ER motif lies at 312–315; it reads HDEF.

The protein belongs to the CREC family. As to quaternary structure, interacts with GGCX.

It localises to the endoplasmic reticulum membrane. It is found in the golgi apparatus. The protein localises to the secreted. The protein resides in the melanosome. Its subcellular location is the sarcoplasmic reticulum lumen. Involved in regulation of vitamin K-dependent carboxylation of multiple N-terminal glutamate residues. Seems to inhibit gamma-carboxylase GGCX. Binds 7 calcium ions with a low affinity. The polypeptide is Calumenin (CALU) (Bos taurus (Bovine)).